The chain runs to 751 residues: SKI family transcriptional corepressor 1 homolog-B (751 aa).

Disordered regions lie at residues 1–30 (MESIPNQLPAGRDSSCSPNSKDLQSYSGPP), 234–267 (SRKRTLPIGRSESSPSQPPRGQTQGEPSDVPHKT), 386–434 (LDVS…GIPP), 459–569 (YGNR…HGNK), and 600–635 (QRETSVKDVHEEEPSSTVEEMEPKNHQDENNISEER). 2 stretches are compositionally biased toward polar residues: residues 14–27 (SSCSPNSKDLQSYS) and 244–259 (SESSPSQPPRGQTQGE). A compositionally biased stretch (basic and acidic residues) spans 416–428 (RNEEDKSGDESRS). Over residues 479 to 491 (SESSSYRSVSPDV) the composition is skewed to low complexity. Residues 539–558 (QENTQMHTLNDLHSTNSSET) show a composition bias toward polar residues. Composition is skewed to basic and acidic residues over residues 559 to 569 (RPSDMESHGNK), 603 to 612 (TSVKDVHEEE), and 620 to 635 (MEPKNHQDENNISEER). The stretch at 666 to 704 (SMAKEELQKQLVEQVELRKKLEREFQNLKDSFQDQMKRE) forms a coiled coil.

The protein belongs to the SKI family.

It localises to the nucleus. May inhibit BMP signaling. In Danio rerio (Zebrafish), this protein is SKI family transcriptional corepressor 1 homolog-B (skor1b).